A 347-amino-acid chain; its full sequence is Anthranilate phosphoribosyltransferase (347 aa).

5-phospho-alpha-D-ribose 1-diphosphate contacts are provided by residues glycine 88, 91 to 92, threonine 96, 98 to 101, 116 to 124, and serine 128; these read GD, NIST, and KHGNRSVSS. Position 88 (glycine 88) interacts with anthranilate. Serine 100 contributes to the Mg(2+) binding site. Anthranilate is bound at residue asparagine 119. An anthranilate-binding site is contributed by arginine 174. Mg(2+) is bound by residues aspartate 232 and glutamate 233.

This sequence belongs to the anthranilate phosphoribosyltransferase family. As to quaternary structure, homodimer. Mg(2+) is required as a cofactor.

It carries out the reaction N-(5-phospho-beta-D-ribosyl)anthranilate + diphosphate = 5-phospho-alpha-D-ribose 1-diphosphate + anthranilate. The protein operates within amino-acid biosynthesis; L-tryptophan biosynthesis; L-tryptophan from chorismate: step 2/5. Functionally, catalyzes the transfer of the phosphoribosyl group of 5-phosphorylribose-1-pyrophosphate (PRPP) to anthranilate to yield N-(5'-phosphoribosyl)-anthranilate (PRA). The polypeptide is Anthranilate phosphoribosyltransferase (Shewanella sp. (strain MR-4)).